The primary structure comprises 238 residues: Purine nucleoside phosphorylase DeoD-type (238 aa).

Residue His5 participates in a purine D-ribonucleoside binding. Phosphate contacts are provided by residues Gly21, Arg25, Arg44, and 88 to 91 (RIGS). Residues 180–182 (EME) and 204–205 (SD) contribute to the a purine D-ribonucleoside site. Residue Asp205 is the Proton donor of the active site.

Belongs to the PNP/UDP phosphorylase family. In terms of assembly, homohexamer; trimer of homodimers.

The enzyme catalyses a purine D-ribonucleoside + phosphate = a purine nucleobase + alpha-D-ribose 1-phosphate. It carries out the reaction a purine 2'-deoxy-D-ribonucleoside + phosphate = a purine nucleobase + 2-deoxy-alpha-D-ribose 1-phosphate. In terms of biological role, catalyzes the reversible phosphorolytic breakdown of the N-glycosidic bond in the beta-(deoxy)ribonucleoside molecules, with the formation of the corresponding free purine bases and pentose-1-phosphate. The protein is Purine nucleoside phosphorylase DeoD-type of Xenorhabdus nematophila (strain ATCC 19061 / DSM 3370 / CCUG 14189 / LMG 1036 / NCIMB 9965 / AN6).